We begin with the raw amino-acid sequence, 306 residues long: tRNA pseudouridine synthase B (306 aa).

D46 serves as the catalytic Nucleophile.

It belongs to the pseudouridine synthase TruB family. Type 1 subfamily.

It catalyses the reaction uridine(55) in tRNA = pseudouridine(55) in tRNA. In terms of biological role, responsible for synthesis of pseudouridine from uracil-55 in the psi GC loop of transfer RNAs. In Gluconacetobacter diazotrophicus (strain ATCC 49037 / DSM 5601 / CCUG 37298 / CIP 103539 / LMG 7603 / PAl5), this protein is tRNA pseudouridine synthase B.